We begin with the raw amino-acid sequence, 144 residues long: UPF0102 protein BTH_I3148 (144 aa).

Residues 1-20 form a disordered region; sequence MCHARAARQATGEAEAAPRD.

It belongs to the UPF0102 family.

This is UPF0102 protein BTH_I3148 from Burkholderia thailandensis (strain ATCC 700388 / DSM 13276 / CCUG 48851 / CIP 106301 / E264).